The sequence spans 846 residues: Protein kintoun (846 aa).

Disordered regions lie at residues 1–21 (MSTA…ERAD), 372–416 (YLSR…PALT), 581–657 (HTSI…DSTI), and 743–846 (HDSS…DDEI). Ser378 carries the post-translational modification Phosphoserine. Residues 389–403 (PVEDDADGDMPETPE) show a composition bias toward acidic residues. Basic residues-rich tracts occupy residues 596-612 (LHKK…KKQR) and 750-766 (QRKK…RAQQ). Ser770 is subject to Phosphoserine. Basic and acidic residues predominate over residues 821–832 (TRQDHADADAKN).

This sequence belongs to the PIH1 family. Kintoun subfamily. Interacts with Pp1alpha-96A, Pp1-87B, Pp1-13C and flw.

It localises to the cytoplasm. In terms of biological role, required for cytoplasmic pre-assembly of axonemal dyneins, thereby playing a central role in motility in cilia and flagella. Involved in pre-assembly of dynein arm complexes in the cytoplasm before intraflagellar transport loads them for the ciliary compartment. The protein is Protein kintoun of Drosophila persimilis (Fruit fly).